Reading from the N-terminus, the 58-residue chain is Potassium channel toxin alpha-KTx 1.6 (58 aa).

A signal peptide spans 1–21 (MKISFLLLLAIVICSIGWTEA). Gln-22 carries the post-translational modification Pyrrolidone carboxylic acid. Cystine bridges form between Cys-28–Cys-49, Cys-34–Cys-54, and Cys-38–Cys-56.

It belongs to the short scorpion toxin superfamily. Potassium channel inhibitor family. Alpha-KTx 01 subfamily. As to expression, expressed by the venom gland.

It localises to the secreted. In terms of biological role, potent blocker of both large-conductance calcium-activated potassium channels (KCa1.1/KCNMA1) and voltage-gated potassium channels (Kv1.3/KCNA3 and ERG1/Kv11.1/KCNH2). This is Potassium channel toxin alpha-KTx 1.6 from Olivierus martensii (Manchurian scorpion).